Consider the following 167-residue polypeptide: uncharacterized protein (167 aa).

This is an uncharacterized protein from Escherichia coli (strain K12).